Consider the following 747-residue polypeptide: Elongation factor G, mitochondrial (747 aa).

Residues 1-16 (MSLIMRVLNGNLSLRL) constitute a mitochondrion transit peptide. Residues 42-319 (ERIRNIGISA…AIIDYLPNPG (278 aa)) enclose the tr-type G domain. GTP-binding positions include 51–58 (AHIDSGKT), 118–122 (DTPGH), and 172–175 (NKLD).

Belongs to the TRAFAC class translation factor GTPase superfamily. Classic translation factor GTPase family. EF-G/EF-2 subfamily.

The protein localises to the mitochondrion. It participates in protein biosynthesis; polypeptide chain elongation. Mitochondrial GTPase that catalyzes the GTP-dependent ribosomal translocation step during translation elongation. During this step, the ribosome changes from the pre-translocational (PRE) to the post-translocational (POST) state as the newly formed A-site-bound peptidyl-tRNA and P-site-bound deacylated tRNA move to the P and E sites, respectively. Catalyzes the coordinated movement of the two tRNA molecules, the mRNA and conformational changes in the ribosome. Essential during development as it acts as a retrograde signal from mitochondria to the nucleus to slow down cell proliferation if mitochondrial energy output is low. This is Elongation factor G, mitochondrial from Drosophila grimshawi (Hawaiian fruit fly).